Consider the following 382-residue polypeptide: Alkanesulfonate monooxygenase (382 aa).

The protein belongs to the SsuD family. In terms of assembly, homotetramer.

The catalysed reaction is an alkanesulfonate + FMNH2 + O2 = an aldehyde + FMN + sulfite + H2O + 2 H(+). Its function is as follows. Catalyzes the desulfonation of aliphatic sulfonates. The sequence is that of Alkanesulfonate monooxygenase from Yersinia pseudotuberculosis serotype IB (strain PB1/+).